Here is a 607-residue protein sequence, read N- to C-terminus: Chaperone protein HtpG (607 aa).

The tract at residues 1–323 (MKKEEKIFKA…CDSLSLNISR (323 aa)) is a; substrate-binding. The tract at residues 324 to 534 (EILQQNAELQ…KGGLSLEMEK (211 aa)) is b. The interval 535–607 (TLSEMTNNND…FIKNLNSLIK (73 aa)) is c.

This sequence belongs to the heat shock protein 90 family. As to quaternary structure, homodimer.

Its subcellular location is the cytoplasm. In terms of biological role, molecular chaperone. Has ATPase activity. This chain is Chaperone protein HtpG, found in Fusobacterium nucleatum subsp. nucleatum (strain ATCC 25586 / DSM 15643 / BCRC 10681 / CIP 101130 / JCM 8532 / KCTC 2640 / LMG 13131 / VPI 4355).